We begin with the raw amino-acid sequence, 361 residues long: S-adenosylmethionine:tRNA ribosyltransferase-isomerase (361 aa).

It belongs to the QueA family. As to quaternary structure, monomer.

The protein resides in the cytoplasm. It catalyses the reaction 7-aminomethyl-7-carbaguanosine(34) in tRNA + S-adenosyl-L-methionine = epoxyqueuosine(34) in tRNA + adenine + L-methionine + 2 H(+). The protein operates within tRNA modification; tRNA-queuosine biosynthesis. Its function is as follows. Transfers and isomerizes the ribose moiety from AdoMet to the 7-aminomethyl group of 7-deazaguanine (preQ1-tRNA) to give epoxyqueuosine (oQ-tRNA). This chain is S-adenosylmethionine:tRNA ribosyltransferase-isomerase, found in Afipia carboxidovorans (strain ATCC 49405 / DSM 1227 / KCTC 32145 / OM5) (Oligotropha carboxidovorans).